The sequence spans 132 residues: MSAIDSAAVLAKIKFNADGLVPAIAQQHDTGEVLMMAWMNAESVAETLATGRVCYFSRSRGGLWRKGETSGQQQRLKDFLIDCDGDTILLKVDQDGVACHTGRRTCFYTAARPEGLTEVAKVQVSPDELYKK.

Aspartate 82 serves as a coordination point for Mg(2+). Residue cysteine 83 participates in Zn(2+) binding. 2 residues coordinate Mg(2+): aspartate 84 and aspartate 86. Residues cysteine 99 and cysteine 106 each coordinate Zn(2+).

The protein belongs to the PRA-CH family. Homodimer. Requires Mg(2+) as cofactor. It depends on Zn(2+) as a cofactor.

The protein localises to the cytoplasm. The enzyme catalyses 1-(5-phospho-beta-D-ribosyl)-5'-AMP + H2O = 1-(5-phospho-beta-D-ribosyl)-5-[(5-phospho-beta-D-ribosylamino)methylideneamino]imidazole-4-carboxamide. It participates in amino-acid biosynthesis; L-histidine biosynthesis; L-histidine from 5-phospho-alpha-D-ribose 1-diphosphate: step 3/9. In terms of biological role, catalyzes the hydrolysis of the adenine ring of phosphoribosyl-AMP. This Paramagnetospirillum magneticum (strain ATCC 700264 / AMB-1) (Magnetospirillum magneticum) protein is Phosphoribosyl-AMP cyclohydrolase.